A 644-amino-acid polypeptide reads, in one-letter code: MVAITLPDGSVKNFEGNTTVMEVAQSIGTGLAKATVAGRVDGQLVDAHDPIAHDAKVEIVTPKDDDGVDIIRHSCAHLLGHAVKQLYPDVKMVIGPVIDDGFYYDIYSETPFTPEHMAAIEKRMMELIKQDYDVIKKITPRAEVIRIFEERGEEYKLKLINDMPGEEAFGLYHHQEYVDMCRGPHVPNTRFLKVFKLTKMSGAYWRGDAKNEQLQRIYGTAWADKKDLKAYIQRIEEAEKRDHRKIGKALNLFHMQEQAPGMVFWHANGWTIYQVLEQYMRKVQHDNGYEEIKTPQIVDRSLWERSGHWGNYATNMFTTSSENRDYAVKPMNCPCHVQVFNQGLKSYRDLPLRMAEFGSCHRNEPSGSLHGLMRVRGFTQDDAHIFCTQSQIQQEVADFIKLTLAVYEDFGFDKIIMKLSTRPEKRVGSDESWDFAEKALADALDSSGLDWAYLPGEGAFYGPKIEFSLKDSLGRVWQCGTIQVDPNMPERLDAEFVNEQNEREVPIMLHRAILGSFERFIGILIENYAGWMPVWLAPQQVVVMNITDKQADACENVVNELKKAGLRAISDLRNEKIGFKIREKTLERIPYMLVLGDKEVESGSINVRTREGENLGVMSVAEFITLVEAAVAEKGRQIPKIDQE.

The TGS domain maps to 1–61 (MVAITLPDGS…AHDAKVEIVT (61 aa)). The interval 242–533 (DHRKIGKALN…LIENYAGWMP (292 aa)) is catalytic. 3 residues coordinate Zn(2+): C333, H384, and H510.

The protein belongs to the class-II aminoacyl-tRNA synthetase family. In terms of assembly, homodimer. Zn(2+) is required as a cofactor.

The protein localises to the cytoplasm. The catalysed reaction is tRNA(Thr) + L-threonine + ATP = L-threonyl-tRNA(Thr) + AMP + diphosphate + H(+). Its function is as follows. Catalyzes the attachment of threonine to tRNA(Thr) in a two-step reaction: L-threonine is first activated by ATP to form Thr-AMP and then transferred to the acceptor end of tRNA(Thr). Also edits incorrectly charged L-seryl-tRNA(Thr). In Psychrobacter cryohalolentis (strain ATCC BAA-1226 / DSM 17306 / VKM B-2378 / K5), this protein is Threonine--tRNA ligase.